The sequence spans 593 residues: NADH-quinone oxidoreductase subunit C/D (593 aa).

The interval 1 to 184 (MTTGSALYIP…DPFSLNLAKQ (184 aa)) is NADH dehydrogenase I subunit C. Residues 208 to 593 (DYMFLNLGPN…IDFVMADVDR (386 aa)) form an NADH dehydrogenase I subunit D region.

The protein in the N-terminal section; belongs to the complex I 30 kDa subunit family. This sequence in the C-terminal section; belongs to the complex I 49 kDa subunit family. NDH-1 is composed of 13 different subunits. Subunits NuoB, CD, E, F, and G constitute the peripheral sector of the complex.

It localises to the cell inner membrane. It carries out the reaction a quinone + NADH + 5 H(+)(in) = a quinol + NAD(+) + 4 H(+)(out). Its function is as follows. NDH-1 shuttles electrons from NADH, via FMN and iron-sulfur (Fe-S) centers, to quinones in the respiratory chain. The immediate electron acceptor for the enzyme in this species is believed to be ubiquinone. Couples the redox reaction to proton translocation (for every two electrons transferred, four hydrogen ions are translocated across the cytoplasmic membrane), and thus conserves the redox energy in a proton gradient. The chain is NADH-quinone oxidoreductase subunit C/D from Pseudomonas fluorescens (strain ATCC BAA-477 / NRRL B-23932 / Pf-5).